The primary structure comprises 241 residues: DNA repair protein RecO (241 aa).

This sequence belongs to the RecO family.

Functionally, involved in DNA repair and RecF pathway recombination. The sequence is that of DNA repair protein RecO from Ruegeria sp. (strain TM1040) (Silicibacter sp.).